Reading from the N-terminus, the 115-residue chain is NAD(P)H-quinone oxidoreductase subunit M (115 aa).

This sequence belongs to the complex I NdhM subunit family. In terms of assembly, NDH-1 can be composed of about 15 different subunits; different subcomplexes with different compositions have been identified which probably have different functions.

The protein resides in the cellular thylakoid membrane. The catalysed reaction is a plastoquinone + NADH + (n+1) H(+)(in) = a plastoquinol + NAD(+) + n H(+)(out). The enzyme catalyses a plastoquinone + NADPH + (n+1) H(+)(in) = a plastoquinol + NADP(+) + n H(+)(out). Its function is as follows. NDH-1 shuttles electrons from an unknown electron donor, via FMN and iron-sulfur (Fe-S) centers, to quinones in the respiratory and/or the photosynthetic chain. The immediate electron acceptor for the enzyme in this species is believed to be plastoquinone. Couples the redox reaction to proton translocation, and thus conserves the redox energy in a proton gradient. Cyanobacterial NDH-1 also plays a role in inorganic carbon-concentration. This Prochlorococcus marinus (strain MIT 9515) protein is NAD(P)H-quinone oxidoreductase subunit M.